The following is a 1074-amino-acid chain: Isoleucine--tRNA ligase (1074 aa).

The 'HIGH' region signature appears at 50-60; it reads PYTSGAAHMGT. Positions 605 to 609 match the 'KMSKS' region motif; that stretch reads GMSKS. Lys608 lines the ATP pocket.

The protein belongs to the class-I aminoacyl-tRNA synthetase family. IleS type 2 subfamily. As to quaternary structure, monomer. It depends on Zn(2+) as a cofactor.

It is found in the cytoplasm. It carries out the reaction tRNA(Ile) + L-isoleucine + ATP = L-isoleucyl-tRNA(Ile) + AMP + diphosphate. Functionally, catalyzes the attachment of isoleucine to tRNA(Ile). As IleRS can inadvertently accommodate and process structurally similar amino acids such as valine, to avoid such errors it has two additional distinct tRNA(Ile)-dependent editing activities. One activity is designated as 'pretransfer' editing and involves the hydrolysis of activated Val-AMP. The other activity is designated 'posttransfer' editing and involves deacylation of mischarged Val-tRNA(Ile). The chain is Isoleucine--tRNA ligase from Haloarcula marismortui (strain ATCC 43049 / DSM 3752 / JCM 8966 / VKM B-1809) (Halobacterium marismortui).